Consider the following 201-residue polypeptide: Glycerol-3-phosphate acyltransferase (201 aa).

Helical transmembrane passes span 10–30, 60–80, 86–106, 116–136, and 166–186; these read MLIG…GLIL, LAAA…LIAA, AAIA…WIGF, LGVL…AWIV, and ALAA…RANI.

This sequence belongs to the PlsY family. Probably interacts with PlsX.

It localises to the cell inner membrane. It carries out the reaction an acyl phosphate + sn-glycerol 3-phosphate = a 1-acyl-sn-glycero-3-phosphate + phosphate. It functions in the pathway lipid metabolism; phospholipid metabolism. In terms of biological role, catalyzes the transfer of an acyl group from acyl-phosphate (acyl-PO(4)) to glycerol-3-phosphate (G3P) to form lysophosphatidic acid (LPA). This enzyme utilizes acyl-phosphate as fatty acyl donor, but not acyl-CoA or acyl-ACP. The polypeptide is Glycerol-3-phosphate acyltransferase (Brucella melitensis biotype 2 (strain ATCC 23457)).